We begin with the raw amino-acid sequence, 242 residues long: MEGWQRAFVLHSRPWSETSLMLDVFTEESGRVRLVAKGARSKRSNLKGVLQPFTPLLLRYSGRGEVKTLRSAEAVSLALPLSGITLYSGLYINELLSRVLEYETRFSELFFDYLNCIQALAGTTGSPEPALRRFELALLGHLGYGVNFTHCAGSGERVDDTMTYRYREEKGFFASVVIDNNTFTGRHLKALEEREFPDVDTLRAAKRFTRMALKPYLGGKPLKSRELFRQFMPKRTVKMKKD.

This sequence belongs to the RecO family. As to quaternary structure, monomer.

In terms of biological role, involved in DNA repair and RecF pathway recombination. The polypeptide is DNA repair protein RecO (Salmonella dublin (strain CT_02021853)).